The chain runs to 269 residues: MPELPEVETSRRGIEPYLVGQTILYAVVRNARLRWPVSDEILALSDQPVLSVQRRAKYLLIELKTGWIIVHLGMSGSLRILPEETEAEKHDHVDLVISNGKILRYTDPRRFGAWLWAKDLETSNVLAHLGPEPLSDEFTAEYLFEKSRNKRTVVKQWLMDNKVVVGVGNIYASESLFTAGILPERAAGSLTETEITQLVATIKAVLLHSIEQGGTTLRDFLQSDGKPGYFAQELQVYGRAGELCRRCGNVIEIAKHGQRSTFFCRHCQH.

The active-site Schiff-base intermediate with DNA is the Pro2. Glu3 functions as the Proton donor in the catalytic mechanism. Lys57 functions as the Proton donor; for beta-elimination activity in the catalytic mechanism. DNA is bound by residues His90, Arg109, and Lys150. The FPG-type zinc finger occupies 235-269 (QVYGRAGELCRRCGNVIEIAKHGQRSTFFCRHCQH). The active-site Proton donor; for delta-elimination activity is the Arg259.

The protein belongs to the FPG family. In terms of assembly, monomer. Zn(2+) is required as a cofactor.

The catalysed reaction is Hydrolysis of DNA containing ring-opened 7-methylguanine residues, releasing 2,6-diamino-4-hydroxy-5-(N-methyl)formamidopyrimidine.. It catalyses the reaction 2'-deoxyribonucleotide-(2'-deoxyribose 5'-phosphate)-2'-deoxyribonucleotide-DNA = a 3'-end 2'-deoxyribonucleotide-(2,3-dehydro-2,3-deoxyribose 5'-phosphate)-DNA + a 5'-end 5'-phospho-2'-deoxyribonucleoside-DNA + H(+). Functionally, involved in base excision repair of DNA damaged by oxidation or by mutagenic agents. Acts as a DNA glycosylase that recognizes and removes damaged bases. Has a preference for oxidized purines, such as 7,8-dihydro-8-oxoguanine (8-oxoG). Has AP (apurinic/apyrimidinic) lyase activity and introduces nicks in the DNA strand. Cleaves the DNA backbone by beta-delta elimination to generate a single-strand break at the site of the removed base with both 3'- and 5'-phosphates. The polypeptide is Formamidopyrimidine-DNA glycosylase (Yersinia enterocolitica serotype O:8 / biotype 1B (strain NCTC 13174 / 8081)).